The sequence spans 396 residues: Cystathionine beta-lyase (396 aa).

Lysine 214 bears the N6-(pyridoxal phosphate)lysine mark.

This sequence belongs to the trans-sulfuration enzymes family. In terms of assembly, homodimer. Pyridoxal 5'-phosphate is required as a cofactor.

The protein localises to the cytoplasm. It catalyses the reaction L,L-cystathionine + H2O = L-homocysteine + pyruvate + NH4(+). The enzyme catalyses an S-substituted L-cysteine + H2O = a thiol + pyruvate + NH4(+). It functions in the pathway amino-acid biosynthesis; L-methionine biosynthesis via de novo pathway; L-homocysteine from L-cystathionine: step 1/1. Functionally, catalyzes the cleavage of cystathionine to homocysteine, pyruvate and ammonia during methionine biosynthesis. Also has cytotoxic activity toward osteogenic, osteosarcoma and tracheal cells, in vitro. The chemical basis for cell toxicity might be the formation and subsequent transfer of sulfane-sulfur to proteins, derived via beta-cystathionase cleavage of L-cystine. The sequence is that of Cystathionine beta-lyase (metC) from Bordetella avium.